The chain runs to 528 residues: MKDASWRDHCTMGCSLFFLALICGSIIGYFLYSFFNQKKLEEKKQAFDNKLKEKEKDLQKREQEMMRNAKIEIASLRQKLELDLEQRTNTIVDLESKNNRREELLNNRTESLNKREEHLDSEKQIISHTKKNLEQQIKEQETILNTQKQQLEKIASLTQDQARQIIMKETRDQTTYEMMSYIKQEEEKAKSEASKKAKTLLVLAMQKYSGDITGEKNISVVNIPNEDMKGRIIGRQGRNIKSLEVLTGVDLIIDESPCTVILSSFDPIRREIAKKTLEFLVSDGRIHPSRIEKALETSTIEVDNFIKEMGEEATFITKIGEVHPDLIKILGKLHFRISYSQNVLKHSLEVAFLAGKLASEIGENEILARRAGLFHDIGKALDHEMEGSHVEIGVSIASKYKEKKEVIDAIASHHEDQEPQSIIAALVAIADTLSSARPGARKESVENYIQRLTKLETIANSTKGVAKSYAIQAGREIRVIVEPDKIADNFIFQTARTIKEQIEKEIIYNGVIKVTVLRETRAVEMAKL.

Residues 15-35 (SLFFLALICGSIIGYFLYSFF) form a helical membrane-spanning segment. Residues 217–277 (NISVVNIPNE…IRREIAKKTL (61 aa)) form the KH domain. The region spanning 343–436 (VLKHSLEVAF…VAIADTLSSA (94 aa)) is the HD domain.

The protein belongs to the RNase Y family.

The protein localises to the cell membrane. Endoribonuclease that initiates mRNA decay. The protein is Ribonuclease Y of Aster yellows witches'-broom phytoplasma (strain AYWB).